Reading from the N-terminus, the 430-residue chain is Adenylosuccinate synthetase (430 aa).

Residues 12-18 (GDEGKGK) and 40-42 (GHT) each bind GTP. D13 acts as the Proton acceptor in catalysis. Residues D13 and G40 each coordinate Mg(2+). IMP is bound by residues 13–16 (DEGK), 38–41 (NAGH), T128, R142, Q223, T238, and R302. Residue H41 is the Proton donor of the active site. 298 to 304 (TTTGRPR) is a binding site for substrate. GTP is bound by residues R304, 330 to 332 (SID), and 412 to 414 (SVG).

It belongs to the adenylosuccinate synthetase family. As to quaternary structure, homodimer. Requires Mg(2+) as cofactor.

Its subcellular location is the cytoplasm. It catalyses the reaction IMP + L-aspartate + GTP = N(6)-(1,2-dicarboxyethyl)-AMP + GDP + phosphate + 2 H(+). Its pathway is purine metabolism; AMP biosynthesis via de novo pathway; AMP from IMP: step 1/2. Functionally, plays an important role in the de novo pathway of purine nucleotide biosynthesis. Catalyzes the first committed step in the biosynthesis of AMP from IMP. This Streptococcus pyogenes serotype M3 (strain ATCC BAA-595 / MGAS315) protein is Adenylosuccinate synthetase.